Reading from the N-terminus, the 430-residue chain is Adenylosuccinate synthetase (430 aa).

GTP contacts are provided by residues 12-18 (GDEGKGK) and 40-42 (GHT). Aspartate 13 serves as the catalytic Proton acceptor. Mg(2+) contacts are provided by aspartate 13 and glycine 40. Residues 13-16 (DEGK), 38-41 (NAGH), threonine 130, arginine 144, glutamine 224, threonine 239, and arginine 303 contribute to the IMP site. Catalysis depends on histidine 41, which acts as the Proton donor. 299 to 305 (TNTGRPR) provides a ligand contact to substrate. GTP contacts are provided by residues arginine 305, 331 to 333 (KLD), and 413 to 415 (STS).

The protein belongs to the adenylosuccinate synthetase family. Homodimer. Mg(2+) serves as cofactor.

Its subcellular location is the cytoplasm. The catalysed reaction is IMP + L-aspartate + GTP = N(6)-(1,2-dicarboxyethyl)-AMP + GDP + phosphate + 2 H(+). It functions in the pathway purine metabolism; AMP biosynthesis via de novo pathway; AMP from IMP: step 1/2. Its function is as follows. Plays an important role in the de novo pathway of purine nucleotide biosynthesis. Catalyzes the first committed step in the biosynthesis of AMP from IMP. The chain is Adenylosuccinate synthetase from Rhodopseudomonas palustris (strain BisB5).